A 493-amino-acid polypeptide reads, in one-letter code: Transcript termination protein A18 (493 aa).

A Helicase ATP-binding domain is found at 100 to 256 (MIELKRPLYI…NSIINIAKLS (157 aa)). 113–120 (LACGFGKT) is a binding site for ATP. The DESH box motif lies at 206–209 (DESH).

This sequence belongs to the helicase family. Poxviruses subfamily. In terms of assembly, interacts with G2. Might be part of a transcription complex composed at least of G2, A18, and H5.

It is found in the virion. In terms of biological role, DNA helicase which seems to act as a postreplicative transcription termination factor. Involved in ATP-dependent release of nascent RNA. Forms a stable complex with single-stranded DNA, and to a lesser extent RNA. The sequence is that of Transcript termination protein A18 from Camelus.